Consider the following 122-residue polypeptide: Small ribosomal subunit protein uS13 (122 aa).

The interval 95-122 (GLPVHGQRTKTNARTRKGPARTVAGKKK) is disordered.

Belongs to the universal ribosomal protein uS13 family. As to quaternary structure, part of the 30S ribosomal subunit. Forms a loose heterodimer with protein S19. Forms two bridges to the 50S subunit in the 70S ribosome.

Its function is as follows. Located at the top of the head of the 30S subunit, it contacts several helices of the 16S rRNA. In the 70S ribosome it contacts the 23S rRNA (bridge B1a) and protein L5 of the 50S subunit (bridge B1b), connecting the 2 subunits; these bridges are implicated in subunit movement. Contacts the tRNAs in the A and P-sites. The chain is Small ribosomal subunit protein uS13 from Geotalea uraniireducens (strain Rf4) (Geobacter uraniireducens).